A 378-amino-acid chain; its full sequence is Tafazzin (378 aa).

Topologically, residues 1-137 (MFMVVCSNLR…RLRNPSKFWY (137 aa)) are mitochondrial intermembrane. Residues 46-112 (APEARPVPDE…DQDADPSLDV (67 aa)) are disordered. The span at 51 to 67 (PVPDERYPGSQQDRKDI) shows a compositional bias: basic and acidic residues. An intramembrane segment occupies 138–158 (VVSQFVVSAVGIFSKVVLMFL). Residues 159 to 378 (NKPRVYNRER…ETEKLHRERN (220 aa)) are Mitochondrial intermembrane-facing. Positions 188–193 (HYSCFD) match the HXXXXD motif motif.

Belongs to the taffazin family. As to quaternary structure, associates with multiple protein complexes. Association with large protein complexes occurs only in the presence of cardiolipin.

The protein localises to the mitochondrion outer membrane. It localises to the mitochondrion inner membrane. The protein resides in the mitochondrion. Its subcellular location is the mitochondrion membrane. It is found in the golgi apparatus membrane. The protein localises to the endoplasmic reticulum membrane. The catalysed reaction is 1'-[1,2-diacyl-sn-glycero-3-phospho],3'-[1-acyl-sn-glycero-3-phospho]-glycerol + a 1,2-diacyl-sn-glycero-3-phosphocholine = a cardiolipin + a 1-acyl-sn-glycero-3-phosphocholine. It catalyses the reaction 1'-[1,2-di-(9Z,12Z-octadecadienoyl)-sn-glycero-3-phospho]-3'-[1-(9Z,12Z-octadecadienoyl)-sn-glycero-3-phospho]-glycerol + 1-hexadecanoyl-2-(9Z,12Z-octadecadienoyl)-sn-glycero-3-phosphocholine = 1',3'-bis-[1,2-di-(9Z,12Z-octadecadienoyl)-sn-glycero-3-phospho]-glycerol + 1-hexadecanoyl-sn-glycero-3-phosphocholine. It carries out the reaction 1'-[1,2-di-(9Z,12Z-octadecadienoyl)-sn-glycero-3-phospho]-3'-[2-(9Z,12Z-octadecadienoyl)-sn-glycero-3-phospho]-glycerol + 1-hexadecanoyl-2-(9Z,12Z-octadecadienoyl)-sn-glycero-3-phosphocholine = 1',3'-bis-[1,2-di-(9Z,12Z-octadecadienoyl)-sn-glycero-3-phospho]-glycerol + 1-hexadecanoyl-sn-glycero-3-phosphocholine. The enzyme catalyses 1,2-di-(9Z,12Z-octadecadienoyl)-sn-glycero-3-phosphocholine + 1'-[1,2-di-(9Z,12Z-octadecadienoyl)-sn-glycero-3-phospho]-3'-[1-(9Z,12Z-octadecadienoyl)-sn-glycero-3-phospho]-glycerol = 1-(9Z,12Z)-octadecadienoyl-sn-glycero-3-phosphocholine + 1',3'-bis-[1,2-di-(9Z,12Z-octadecadienoyl)-sn-glycero-3-phospho]-glycerol. The catalysed reaction is 1-tetradecanoyl-sn-glycero-3-phosphocholine + 1',3'-bis-[1,2-di-(9Z,12Z-octadecadienoyl)-sn-glycero-3-phospho]-glycerol = 1-tetradecanoyl-2-(9Z,12Z-octadecadienoyl)-sn-glycero-3-phosphocholine + 1'-[1,2-di-(9Z,12Z-octadecadienoyl)-sn-glycero-3-phospho]-3'-[1-(9Z,12Z-octadecadienoyl)-sn-glycero-3-phospho]-glycerol. It catalyses the reaction 1',3'-bis[1,2-di-(9Z-octadecenoyl)-sn-glycero-3-phospho]-glycerol + 1-nonadecanoyl-sn-glycero-3-phosphocholine = 1-nonadecanoyl-2-(9Z-octadecenoyl)-sn-glycero-3-phosphocholine + 1'-[1,2-di-(9Z-octadecenoyl)-sn-glycero-3-phospho]-3'-[1-(9Z-octadecenoyl)-sn-glycero-3-phospho]-glycerol. It carries out the reaction a 1,2-diacyl-sn-glycero-3-phospho-(1'-sn-glycerol) + a 1-acyl-sn-glycero-3-phosphocholine = 1-acyl-sn-glycero-3-phospho-(1'-sn-glycerol) + a 1,2-diacyl-sn-glycero-3-phosphocholine. The enzyme catalyses 1-hexadecanoyl-2-(9Z,12Z-octadecadienoyl)-sn-glycero-3-phospho-(1'-sn-glycerol) + 1-hexadecanoyl-sn-glycero-3-phosphocholine = 1-hexadecanoyl-sn-glycero-3-phospho-(1'-sn-glycerol) + 1-hexadecanoyl-2-(9Z,12Z-octadecadienoyl)-sn-glycero-3-phosphocholine. The catalysed reaction is 1,2-di-(9Z-octadecenoyl)-sn-glycero-3-phospho-(1'-sn-glycerol) + 1-nonadecanoyl-sn-glycero-3-phosphocholine = 1-nonadecanoyl-2-(9Z-octadecenoyl)-sn-glycero-3-phosphocholine + 1-(9Z-octadecenoyl)-sn-glycero-3-phospho-(1'-sn-glycerol). It catalyses the reaction a 1,2-diacyl-sn-glycero-3-phosphate + a 1-acyl-sn-glycero-3-phosphocholine = a 1-acyl-sn-glycero-3-phosphate + a 1,2-diacyl-sn-glycero-3-phosphocholine. It carries out the reaction 1-hexadecanoyl-2-(9Z,12Z-octadecadienoyl)-sn-glycero-3-phosphate + 1-hexadecanoyl-sn-glycero-3-phosphocholine = 1-hexadecanoyl-2-(9Z,12Z-octadecadienoyl)-sn-glycero-3-phosphocholine + 1-hexadecanoyl-sn-glycero-3-phosphate. The enzyme catalyses 1-hexadecanoyl-2-(9Z,12Z-octadecadienoyl)-sn-glycero-3-phosphocholine + 1-(9Z-octadecenoyl)-sn-glycero-3-phosphate = 1-(9Z)-octadecenoyl-2-(9Z,12Z)-octadecadienoyl-sn-glycero-3-phosphate + 1-hexadecanoyl-sn-glycero-3-phosphocholine. The catalysed reaction is a 1-acyl-sn-glycero-3-phosphocholine + a 1,2-diacyl-sn-glycero-3-phosphoethanolamine = a 1-acyl-sn-glycero-3-phosphoethanolamine + a 1,2-diacyl-sn-glycero-3-phosphocholine. It catalyses the reaction 1-hexadecanoyl-2-(9Z,12Z-octadecadienoyl)-sn-glycero-3-phosphoethanolamine + 1-hexadecanoyl-sn-glycero-3-phosphocholine = 1-hexadecanoyl-2-(9Z,12Z-octadecadienoyl)-sn-glycero-3-phosphocholine + 1-hexadecanoyl-sn-glycero-3-phosphoethanolamine. It carries out the reaction 1,2-di-(9Z,12Z-octadecadienoyl)-sn-glycero-3-phosphoethanolamine + 1-tetradecanoyl-sn-glycero-3-phosphocholine = 1-(9Z,12Z-octadecadienoyl)-sn-glycero-3-phosphoethanolamine + 1-tetradecanoyl-2-(9Z,12Z-octadecadienoyl)-sn-glycero-3-phosphocholine. The enzyme catalyses 1'-[1,2-diacyl-sn-glycero-3-phospho],3'-[1-acyl-sn-glycero-3-phospho]-glycerol + a 1,2-diacyl-sn-glycero-3-phosphoethanolamine = a cardiolipin + a 1-acyl-sn-glycero-3-phosphoethanolamine. The catalysed reaction is 1-hexadecanoyl-2-(9Z,12Z-octadecadienoyl)-sn-glycero-3-phosphoethanolamine + 1'-[1,2-di-(9Z,12Z-octadecadienoyl)-sn-glycero-3-phospho]-3'-[1-(9Z,12Z-octadecadienoyl)-sn-glycero-3-phospho]-glycerol = 1',3'-bis-[1,2-di-(9Z,12Z-octadecadienoyl)-sn-glycero-3-phospho]-glycerol + 1-hexadecanoyl-sn-glycero-3-phosphoethanolamine. It catalyses the reaction 1'-[1-(9Z,12Z-octadecadienoyl)-2-(9Z-octadecenoyl)-sn-glycero-3-phospho]-3'-[1-(9Z,12Z-octadecadienoyl)-sn-glycero-3-phospho]-glycerol + 1',3'-bis-[1,2-di-(9Z,12Z-octadecadienoyl)-sn-glycero-3-phospho]-glycerol = 1'-[1,2-di-(9Z,12Z-octadecadienoyl)-sn-glycero-3-phospho]-3'-[1-(9Z,12Z-octadecadienoyl)-2-(9Z-octadecenoyl)-sn-glycero-3-phospho]-glycerol + 1'-[1,2-di-(9Z,12Z-octadecadienoyl)-sn-glycero-3-phospho]-3'-[1-(9Z,12Z-octadecadienoyl)-sn-glycero-3-phospho]-glycerol. It carries out the reaction 1,2-di-(9Z-hexadecenoyl)-sn-glycero-3-phosphocholine + 1-hexadecanoyl-sn-glycero-3-phosphocholine = 1-hexadecanoyl-2-(9Z-hexadecenoyl)-sn-glycero-3-phosphocholine + 1-(9Z-hexadecenoyl)-sn-glycero-3-phosphocholine. The enzyme catalyses 1,2-dioctadecanoyl-sn-glycero-3-phosphocholine + 1-hexadecanoyl-sn-glycero-3-phosphocholine = 1-hexadecanoyl-2-octadecanoyl-sn-glycero-3-phosphocholine + 1-octadecanoyl-sn-glycero-3-phosphocholine. The catalysed reaction is 1,2-di-(9Z-octadecenoyl)-sn-glycero-3-phosphocholine + 1-hexadecanoyl-sn-glycero-3-phosphocholine = 1-hexadecanoyl-2-(9Z-octadecenoyl)-sn-glycero-3-phosphocholine + 1-(9Z-octadecenoyl)-sn-glycero-3-phosphocholine. It catalyses the reaction 1,2-di-(9Z,12Z-octadecadienoyl)-sn-glycero-3-phosphocholine + 1-(9Z-octadecenoyl)-sn-glycero-3-phosphocholine = 1-(9Z)-octadecenoyl-2-(9Z,12Z)-octadecadienoyl-sn-glycero-3-phosphocholine + 1-(9Z,12Z)-octadecadienoyl-sn-glycero-3-phosphocholine. It carries out the reaction 1,2-di-(9Z,12Z,15Z-octadecatrienoyl)-sn-glycero-3-phosphocholine + 1-tetradecanoyl-sn-glycero-3-phosphocholine = 1-tetradecanoyl-2-(9Z,12Z,15Z-octadecatrienoyl)-sn-glycero-3-phosphocholine + 1-(9Z,12Z,15Z-octadecatrienoyl)-sn-glycero-3-phosphocholine. The enzyme catalyses 1-nonadecanoyl-sn-glycero-3-phosphocholine + 1-octadecanoyl-2-(9Z-octadecenoyl)-sn-glycero-3-phosphocholine = 1-nonadecanoyl-2-(9Z-octadecenoyl)-sn-glycero-3-phosphocholine + 1-octadecanoyl-sn-glycero-3-phosphocholine. The catalysed reaction is 1-(9Z)-octadecenoyl-2-octadecanoyl-sn-glycero-3-phosphocholine + 1-nonadecanoyl-sn-glycero-3-phosphocholine = 2-octadecanoyl-sn-glycero-3-phosphocholine + 1-nonadecanoyl-2-(9Z-octadecenoyl)-sn-glycero-3-phosphocholine. It participates in phospholipid metabolism. In terms of biological role, acyltransferase required to remodel newly synthesized phospholipid cardiolipin (1',3'-bis-[1,2-diacyl-sn-glycero-3-phospho]-glycerol or CL), a key component of the mitochondrial inner membrane, with tissue specific acyl chains necessary for adequate mitochondrial function. Its role in cellular physiology is to improve mitochondrial performance. CL is critical for the coassembly of lipids and proteins in mitochondrial membranes. For instance, remodeling of the acyl groups of CL in the mitochondrial inner membrane affects the assembly and stability of respiratory chain complex IV and its supercomplex forms. Catalyzes the transacylation between phospholipids and lysophospholipids, with the highest rate being between phosphatidylcholine (1,2-diacyl-sn-glycero-3-phosphocholine or PC) and CL. Catalyzes both 1-acyl-sn-glycero-3-phosphocholine (lysophosphatidylcholine or LPC) reacylation and PC-CL transacylation, that means, it exchanges acyl groups between CL and PC by a combination of forward and reverse transacylations. Also catalyzes transacylations between other phospholipids such as phosphatidylethanolamine (1,2-diacyl-sn-glycero-3-phosphoethanolamine or PE) and CL, between PC and PE, and between PC and phosphatidate (1,2-diacyl-sn-glycero-3-phosphate or PA), although at lower rate. Not regiospecific, it transfers acyl groups into any of the sn-1 and sn-2 positions of the monolysocardiolipin (MLCL), which is an important prerequisite for uniformity and symmetry in CL acyl distribution. Cannot transacylate dilysocardiolipin (DLCL), thus, the role of MLCL is limited to that of an acyl acceptor. CoA-independent, it can reshuffle molecular species within a single phospholipid class. Redistributes fatty acids between MLCL, CL, and other lipids, which prolongs the half-life of CL. Its action is completely reversible, which allows for cyclic changes, such as fission and fusion or bending and flattening of the membrane. Hence, by contributing to the flexibility of the lipid composition, it plays an important role in the dynamics of mitochondria membranes. Essential for the final stage of spermatogenesis, spermatid individualization. Required for the initiation of mitophagy. This chain is Tafazzin, found in Drosophila melanogaster (Fruit fly).